Reading from the N-terminus, the 383-residue chain is Podocin (383 aa).

Over residues 1 to 41 the composition is skewed to basic and acidic residues; the sequence is MERRARSSSRESRGRGGRTPHKENKRAKAERSGGGRGRQEA. The segment at 1–76 is disordered; the sequence is MERRARSSSR…VDEVRGSGEE (76 aa). Topologically, residues 1-102 are cytoplasmic; it reads MERRARSSSR…TKSSGLGACE (102 aa). Cysteine 101 carries the S-palmitoyl cysteine lipid modification. Residues 103–123 lie within the membrane without spanning it; that stretch reads WLLVLISLLFIIMTFPFSIWF. At 124 to 383 the chain is on the cytoplasmic side; it reads CVKVVQEYER…NPKKKDSPML (260 aa). N-linked (GlcNAc...) asparagine glycosylation is present at glutamine 287. Positions 355–383 are disordered; it reads NRTQGSLPFPSPSKPVEPLNPKKKDSPML. Basic and acidic residues predominate over residues 374–383; the sequence is NPKKKDSPML.

Belongs to the band 7/mec-2 family. In terms of assembly, interacts with nephrin/NPHS1 and KIRREL1. Interacts directly with CD2AP. Interacts with DDN. Glycosylated. As to expression, almost exclusively expressed in the podocytes of fetal and mature kidney glomeruli.

The protein localises to the cell membrane. Its subcellular location is the endoplasmic reticulum. In terms of biological role, plays a role in the regulation of glomerular permeability, acting probably as a linker between the plasma membrane and the cytoskeleton. In Homo sapiens (Human), this protein is Podocin (NPHS2).